Consider the following 394-residue polypeptide: Thioredoxin-interacting protein (394 aa).

Residue Lys-212 forms a Glycyl lysine isopeptide (Lys-Gly) (interchain with G-Cter in ubiquitin) linkage. Ser-361 carries the phosphoserine modification.

It belongs to the arrestin family. Homodimer; disulfide-linked. Interacts with TXN/thioredoxin through its redox-active site. Interacts with transcriptional repressors ZBTB16, ZBTB32 and HDAC1. Interacts with DDIT4. Post-translationally, ubiquitinated; undergoes heterotypic 'Lys-48'-/'Lys-63'-branched polyubiquitination catalyzed by ITCH and UBR5 resulting in proteasomal degradation. Deubiquitinated by USP5, leading to TXNIP stabilization.

Its subcellular location is the cytoplasm. May act as an oxidative stress mediator by inhibiting thioredoxin activity or by limiting its bioavailability. Interacts with COPS5 and restores COPS5-induced suppression of CDKN1B stability, blocking the COPS5-mediated translocation of CDKN1B from the nucleus to the cytoplasm. Functions as a transcriptional repressor, possibly by acting as a bridge molecule between transcription factors and corepressor complexes, and over-expression will induce G0/G1 cell cycle arrest. Required for the maturation of natural killer cells. Acts as a suppressor of tumor cell growth. Inhibits the proteasomal degradation of DDIT4, and thereby contributes to the inhibition of the mammalian target of rapamycin complex 1 (mTORC1). The chain is Thioredoxin-interacting protein (Txnip) from Rattus norvegicus (Rat).